The following is a 279-amino-acid chain: Ribosomal RNA small subunit methyltransferase A (279 aa).

Residues H10, L12, G37, E58, D83, and N108 each contribute to the S-adenosyl-L-methionine site.

Belongs to the class I-like SAM-binding methyltransferase superfamily. rRNA adenine N(6)-methyltransferase family. RsmA subfamily.

Its subcellular location is the cytoplasm. The catalysed reaction is adenosine(1518)/adenosine(1519) in 16S rRNA + 4 S-adenosyl-L-methionine = N(6)-dimethyladenosine(1518)/N(6)-dimethyladenosine(1519) in 16S rRNA + 4 S-adenosyl-L-homocysteine + 4 H(+). In terms of biological role, specifically dimethylates two adjacent adenosines (A1518 and A1519) in the loop of a conserved hairpin near the 3'-end of 16S rRNA in the 30S particle. May play a critical role in biogenesis of 30S subunits. In Synechococcus elongatus (strain ATCC 33912 / PCC 7942 / FACHB-805) (Anacystis nidulans R2), this protein is Ribosomal RNA small subunit methyltransferase A.